Here is a 222-residue protein sequence, read N- to C-terminus: 7-cyano-7-deazaguanine synthase (222 aa).

7-17 (LSGGLDSSTVL) provides a ligand contact to ATP. Zn(2+)-binding residues include Cys-191, Cys-199, Cys-202, and Cys-205.

The protein belongs to the QueC family. The cofactor is Zn(2+).

It carries out the reaction 7-carboxy-7-deazaguanine + NH4(+) + ATP = 7-cyano-7-deazaguanine + ADP + phosphate + H2O + H(+). The protein operates within purine metabolism; 7-cyano-7-deazaguanine biosynthesis. In terms of biological role, catalyzes the ATP-dependent conversion of 7-carboxy-7-deazaguanine (CDG) to 7-cyano-7-deazaguanine (preQ(0)). This chain is 7-cyano-7-deazaguanine synthase, found in Trichodesmium erythraeum (strain IMS101).